Consider the following 271-residue polypeptide: Shikimate dehydrogenase (NADP(+)) (271 aa).

Residues 15–17 (SKS) and threonine 62 each bind shikimate. The Proton acceptor role is filled by lysine 66. Residue glutamate 78 participates in NADP(+) binding. The shikimate site is built by asparagine 87 and aspartate 103. Residues 127 to 131 (GAGGA), 151 to 156 (NRTQAK), and methionine 214 contribute to the NADP(+) site. Residue tyrosine 216 participates in shikimate binding. Glycine 238 is a binding site for NADP(+).

It belongs to the shikimate dehydrogenase family. Homodimer.

The enzyme catalyses shikimate + NADP(+) = 3-dehydroshikimate + NADPH + H(+). The protein operates within metabolic intermediate biosynthesis; chorismate biosynthesis; chorismate from D-erythrose 4-phosphate and phosphoenolpyruvate: step 4/7. In terms of biological role, involved in the biosynthesis of the chorismate, which leads to the biosynthesis of aromatic amino acids. Catalyzes the reversible NADPH linked reduction of 3-dehydroshikimate (DHSA) to yield shikimate (SA). This Shewanella pealeana (strain ATCC 700345 / ANG-SQ1) protein is Shikimate dehydrogenase (NADP(+)).